The following is a 136-amino-acid chain: UPF0225 protein Pnap_0466 (136 aa).

The protein belongs to the UPF0225 family.

In Polaromonas naphthalenivorans (strain CJ2), this protein is UPF0225 protein Pnap_0466.